The chain runs to 321 residues: Viral T-cell receptor beta chain-like T17T-22 (321 aa).

The first 28 residues, 1 to 28 (MISWLPSVAMGSRLLCCVALCLLGAGPA), serve as a signal peptide directing secretion. The v segment stretch occupies residues 29–122 (DSGLTQTPRH…DSALYLCASS (94 aa)). Asn-105 carries an N-linked (GlcNAc...) asparagine; by host glycan. Residues 123 to 128 (PNEDSE) are d segment. Positions 129–144 (YGETLYFGEGSRLTVV) are j segment. Residues 145 to 321 (EDLKKVSPPK…LMAKVKRKDS (177 aa)) are c region. Asn-214 and Asn-264 each carry an N-linked (GlcNAc...) asparagine; by host glycan.

This is Viral T-cell receptor beta chain-like T17T-22 (V-TCR) from Feline leukemia virus.